We begin with the raw amino-acid sequence, 436 residues long: Serine--tRNA ligase (436 aa).

Basic and acidic residues predominate over residues 43 to 55; it reads TKSEQLKQKRNEV. Positions 43 to 68 are disordered; that stretch reads TKSEQLKQKRNEVSDQIAQAKRNKED. 237–239 provides a ligand contact to L-serine; the sequence is TAE. 268 to 270 provides a ligand contact to ATP; it reads RSE. Glu-291 is a binding site for L-serine. 355-358 serves as a coordination point for ATP; the sequence is EISS. An L-serine-binding site is contributed by Ser-390.

Belongs to the class-II aminoacyl-tRNA synthetase family. Type-1 seryl-tRNA synthetase subfamily. Homodimer. The tRNA molecule binds across the dimer.

It is found in the cytoplasm. The enzyme catalyses tRNA(Ser) + L-serine + ATP = L-seryl-tRNA(Ser) + AMP + diphosphate + H(+). It carries out the reaction tRNA(Sec) + L-serine + ATP = L-seryl-tRNA(Sec) + AMP + diphosphate + H(+). It functions in the pathway aminoacyl-tRNA biosynthesis; selenocysteinyl-tRNA(Sec) biosynthesis; L-seryl-tRNA(Sec) from L-serine and tRNA(Sec): step 1/1. In terms of biological role, catalyzes the attachment of serine to tRNA(Ser). Is also able to aminoacylate tRNA(Sec) with serine, to form the misacylated tRNA L-seryl-tRNA(Sec), which will be further converted into selenocysteinyl-tRNA(Sec). The sequence is that of Serine--tRNA ligase from Lactobacillus johnsonii (strain CNCM I-12250 / La1 / NCC 533).